A 533-amino-acid polypeptide reads, in one-letter code: T-complex protein 1 subunit delta (533 aa).

Residues methionine 1–alanine 24 are disordered.

Belongs to the TCP-1 chaperonin family. In terms of assembly, heterooligomeric complex of about 850 to 900 kDa that forms two stacked rings, 12 to 16 nm in diameter.

The protein resides in the cytoplasm. Molecular chaperone; assists the folding of proteins upon ATP hydrolysis. Known to play a role, in vitro, in the folding of actin and tubulin. This chain is T-complex protein 1 subunit delta, found in Ochlerotatus triseriatus (Eastern treehole mosquito).